Here is an 87-residue protein sequence, read N- to C-terminus: Omega-lycotoxin-Am1d (87 aa).

A signal peptide spans 1–17 (MKLSIFFVLFFIAIAYC). A propeptide spanning residues 18–40 (QPEFLDDEEDEVEETLPVAEEGR) is cleaved from the precursor. 4 disulfides stabilise this stretch: C44/C59, C51/C64, C58/C84, and C66/C82.

The protein belongs to the neurotoxin omega-lctx family. Expressed by the venom gland.

It localises to the secreted. Its function is as follows. Modulates Cav2.1/CACNA1A voltage-gated calcium channels (P/Q-type currents) in rat cerebellar Purkinje cells and hippocampal CA1-CA3 neurons. At saturating concentrations (&gt;10 nM) decelerates activation kinetics and slightly increases peak amplitude without affecting deactivation kinetics. In vivo, does not cause death when intravenously injected into mice. In rat models, through its activity on Cav2.1/CACNA1A, has an ameliorative effect on memory defects provoked by hyperstimulation of N-methyl-D-aspartate receptors (NMDARs) in the hippocampus. The chain is Omega-lycotoxin-Am1d from Alopecosa marikovskyi (Wolf spider).